The sequence spans 185 residues: Putative manganese efflux pump MntP (185 aa).

6 helical membrane-spanning segments follow: residues 3–23 (PFAV…VSVG), 41–61 (AVFG…GVAA), 70–90 (HWLA…AAVW), 101–121 (SFTV…AVGV), 123–143 (LAFL…ATFL), and 165–185 (AVAG…HLTA).

Belongs to the MntP (TC 9.B.29) family.

The protein resides in the cell inner membrane. Functionally, probably functions as a manganese efflux pump. The protein is Putative manganese efflux pump MntP of Bradyrhizobium sp. (strain BTAi1 / ATCC BAA-1182).